We begin with the raw amino-acid sequence, 107 residues long: Protein Rev (107 aa).

S5 and S8 each carry phosphoserine; by host CK2. A homomultimerization region spans residues 18-26 (IIKILYQSN). 2 disordered regions span residues 26–48 (NPYPTPEGTRQARRNRRRRWRAR) and 81–107 (LNLDCSEDSGTSGTQQSQGTTEGVGNP). A Nuclear localization signal and RNA-binding (RRE) motif is present at residues 34–50 (TRQARRNRRRRWRARQR). A compositionally biased stretch (basic residues) spans 36-48 (QARRNRRRRWRAR). Positions 73 to 84 (LQLPPLERLNLD) match the Nuclear export signal and binding to XPO1 motif. Over residues 89–101 (SGTSGTQQSQGTT) the composition is skewed to low complexity. The residue at position 92 (S92) is a Phosphoserine; by host.

It belongs to the HIV-1 REV protein family. Homomultimer; when bound to the RRE. Multimeric assembly is essential for activity and may involve XPO1. Binds to human KPNB1, XPO1, TNPO1, RANBP5 and IPO7. Interacts with the viral Integrase. Interacts with human KHDRBS1. Interacts with human NAP1; this interaction decreases Rev multimerization and stimulates its activity. Interacts with human DEAD-box helicases DDX3 and DDX24; these interactions may serve for viral RNA export to the cytoplasm and packaging, respectively. Interacts with human PSIP1; this interaction may inhibit HIV-1 DNA integration by promoting dissociation of the Integrase-LEDGF/p75 complex. In terms of processing, asymmetrically arginine dimethylated at one site by host PRMT6. Methylation impairs the RNA-binding activity and export of viral RNA from the nucleus to the cytoplasm. Phosphorylated by protein kinase CK2. Presence of, and maybe binding to the N-terminus of the regulatory beta subunit of CK2 is necessary for CK2-mediated Rev's phosphorylation.

Its subcellular location is the host nucleus. The protein localises to the host nucleolus. It is found in the host cytoplasm. In terms of biological role, escorts unspliced or incompletely spliced viral pre-mRNAs (late transcripts) out of the nucleus of infected cells. These pre-mRNAs carry a recognition sequence called Rev responsive element (RRE) located in the env gene, that is not present in fully spliced viral mRNAs (early transcripts). This function is essential since most viral proteins are translated from unspliced or partially spliced pre-mRNAs which cannot exit the nucleus by the pathway used by fully processed cellular mRNAs. Rev itself is translated from a fully spliced mRNA that readily exits the nucleus. Rev's nuclear localization signal (NLS) binds directly to KPNB1/Importin beta-1 without previous binding to KPNA1/Importin alpha-1. KPNB1 binds to the GDP bound form of RAN (Ran-GDP) and targets Rev to the nucleus. In the nucleus, the conversion from Ran-GDP to Ran-GTP dissociates Rev from KPNB1 and allows Rev's binding to the RRE in viral pre-mRNAs. Rev multimerization on the RRE via cooperative assembly exposes its nuclear export signal (NES) to the surface. Rev can then form a complex with XPO1/CRM1 and Ran-GTP, leading to nuclear export of the complex. Conversion from Ran-GTP to Ran-GDP mediates dissociation of the Rev/RRE/XPO1/RAN complex, so that Rev can return to the nucleus for a subsequent round of export. Beside KPNB1, also seems to interact with TNPO1/Transportin-1, RANBP5/IPO5 and IPO7/RANBP7 for nuclear import. The nucleoporin-like HRB/RIP is an essential cofactor that probably indirectly interacts with Rev to release HIV RNAs from the perinuclear region to the cytoplasm. The protein is Protein Rev of Homo sapiens (Human).